The sequence spans 236 residues: uncharacterized protein (236 aa).

Polar residues predominate over residues 1-17 (MSVSSLLQPNTYNINSK). Residues 1-94 (MSVSSLLQPN…GVKGTTGGTI (94 aa)) form a disordered region. A compositionally biased stretch (low complexity) spans 18–35 (SQSLSNTPSNPTSQTNTL). One can recognise a Collagen-like domain in the interval 58–91 (GPSGPKGDKGDPGSKGETGSQGIKGDPGVKGTTG).

This sequence belongs to the sputnik virus V6 family.

This is an uncharacterized protein from Sputnik virophage.